The following is a 21-amino-acid chain: Thioredoxin (21 aa).

Lys3 bears the N6-acetyllysine mark. Residue Lys8 is modified to N6-succinyllysine.

Belongs to the thioredoxin family. As to quaternary structure, homodimer; disulfide-linked. Interacts with TXNIP through the redox-active site. Interacts with MAP3K5 and CASP3. Interacts with APEX1; the interaction stimulates the FOS/JUN AP-1 DNA-binding activity in a redox-dependent manner.

It is found in the nucleus. It localises to the cytoplasm. Its subcellular location is the secreted. Its function is as follows. Participates in various redox reactions through the reversible oxidation of its active center dithiol to a disulfide and catalyzes dithiol-disulfide exchange reactions. Plays a role in the reversible S-nitrosylation of cysteine residues in target proteins, and thereby contributes to the response to intracellular nitric oxide. Nitrosylates the active site Cys of CASP3 in response to nitric oxide (NO), and thereby inhibits caspase-3 activity. Induces the FOS/JUN AP-1 DNA binding activity in ionizing radiation (IR) cells through its oxidation/reduction status and stimulates AP-1 transcriptional activity. This is Thioredoxin (TXN) from Canis lupus familiaris (Dog).